Consider the following 468-residue polypeptide: 6-phospho-beta-galactosidase (468 aa).

Residues Q19, H116, N159, E160, and N297 each coordinate D-galactose 6-phosphate. E160 (proton donor) is an active-site residue. E375 (nucleophile) is an active-site residue. D-galactose 6-phosphate contacts are provided by S428, W429, K435, and Y437.

Belongs to the glycosyl hydrolase 1 family.

It catalyses the reaction a 6-phospho-beta-D-galactoside + H2O = D-galactose 6-phosphate + an alcohol. The protein operates within carbohydrate metabolism; lactose degradation; D-galactose 6-phosphate and beta-D-glucose from lactose 6-phosphate: step 1/1. This chain is 6-phospho-beta-galactosidase, found in Streptococcus mutans serotype c (strain ATCC 700610 / UA159).